We begin with the raw amino-acid sequence, 122 residues long: Large ribosomal subunit protein uL14 (122 aa).

This sequence belongs to the universal ribosomal protein uL14 family. As to quaternary structure, part of the 50S ribosomal subunit. Forms a cluster with proteins L3 and L19. In the 70S ribosome, L14 and L19 interact and together make contacts with the 16S rRNA in bridges B5 and B8.

Its function is as follows. Binds to 23S rRNA. Forms part of two intersubunit bridges in the 70S ribosome. This chain is Large ribosomal subunit protein uL14, found in Acinetobacter baylyi (strain ATCC 33305 / BD413 / ADP1).